Consider the following 520-residue polypeptide: GMP synthase [glutamine-hydrolyzing] (520 aa).

A Glutamine amidotransferase type-1 domain is found at 9–202 (KILILDFGSQ…VRKICGCSGQ (194 aa)). The Nucleophile role is filled by Cys-86. Catalysis depends on residues His-176 and Glu-178. The region spanning 203–395 (WTPGHIIDDA…LGLPHQMVWR (193 aa)) is the GMPS ATP-PPase domain. Position 230-236 (230-236 (SGGVDSS)) interacts with ATP.

Homodimer.

The enzyme catalyses XMP + L-glutamine + ATP + H2O = GMP + L-glutamate + AMP + diphosphate + 2 H(+). The protein operates within purine metabolism; GMP biosynthesis; GMP from XMP (L-Gln route): step 1/1. Its function is as follows. Catalyzes the synthesis of GMP from XMP. This is GMP synthase [glutamine-hydrolyzing] from Geobacter metallireducens (strain ATCC 53774 / DSM 7210 / GS-15).